The sequence spans 142 residues: Glia maturation factor gamma (142 aa).

An N-acetylserine modification is found at serine 2. The ADF-H domain maps to 4–139; it reads SLVVCEVDPE…TETWLKEKLA (136 aa).

Belongs to the actin-binding proteins ADF family. GMF subfamily.

In Mus musculus (Mouse), this protein is Glia maturation factor gamma (Gmfg).